Reading from the N-terminus, the 745-residue chain is Ribosomal protein S6 kinase alpha-6 (745 aa).

The segment at 1–28 is disordered; that stretch reads MLPFAPQDEPWDREMEVFSGGGASSGEV. Positions 73–330 constitute a Protein kinase 1 domain; it reads FELLKVLGQG…VEEIKRHLFF (258 aa). Residues 79–87 and Lys-105 contribute to the ATP site; that span reads LGQGSFGKV. The Proton acceptor role is filled by Asp-198. Phosphoserine occurs at positions 232, 372, and 389. In terms of domain architecture, AGC-kinase C-terminal spans 331–400; it reads ANIDWDKLYK…VATSIAEEYK (70 aa). The 258-residue stretch at 426–683 folds into the Protein kinase 2 domain; sequence YELKEDIGVG…AEQILKHSWI (258 aa). ATP contacts are provided by residues 432 to 440 and Lys-455; that span reads IGVGSYSVC. Asp-543 (proton acceptor) is an active-site residue. Thr-581 bears the Phosphothreonine mark.

This sequence belongs to the protein kinase superfamily. AGC Ser/Thr protein kinase family. S6 kinase subfamily. As to quaternary structure, forms a complex with MAPK3/ERK1 but not with MAPK9 or MAPK14 in serum-starved cells. Mg(2+) serves as cofactor. Post-translationally, phosphorylated at Ser-232, Ser-372, and Ser-389 in serum-starved cells.

Its subcellular location is the cytoplasm. The protein localises to the cytosol. It localises to the nucleus. The catalysed reaction is L-seryl-[protein] + ATP = O-phospho-L-seryl-[protein] + ADP + H(+). The enzyme catalyses L-threonyl-[protein] + ATP = O-phospho-L-threonyl-[protein] + ADP + H(+). Constitutively activated by phosphorylation at Ser-232, Ser-372, and Ser-389 in serum-starved cells. Does not require growth factor stimulation for significant kinase activity. Its function is as follows. Constitutively active serine/threonine-protein kinase that exhibits growth-factor-independent kinase activity and that may participate in p53/TP53-dependent cell growth arrest signaling and play an inhibitory role during embryogenesis. The chain is Ribosomal protein S6 kinase alpha-6 (RPS6KA6) from Homo sapiens (Human).